The chain runs to 361 residues: Phospho-N-acetylmuramoyl-pentapeptide-transferase (361 aa).

A run of 10 helical transmembrane segments spans residues Arg-25–Ile-45, Thr-73–Leu-93, Val-98–Ile-118, Ile-139–Thr-159, Ile-168–Phe-188, Gly-200–Ser-220, Ala-237–Phe-257, Val-264–Ile-284, Met-289–Val-309, and Val-339–Lys-359.

It belongs to the glycosyltransferase 4 family. MraY subfamily. Mg(2+) is required as a cofactor.

It localises to the cell inner membrane. The catalysed reaction is UDP-N-acetyl-alpha-D-muramoyl-L-alanyl-gamma-D-glutamyl-meso-2,6-diaminopimeloyl-D-alanyl-D-alanine + di-trans,octa-cis-undecaprenyl phosphate = di-trans,octa-cis-undecaprenyl diphospho-N-acetyl-alpha-D-muramoyl-L-alanyl-D-glutamyl-meso-2,6-diaminopimeloyl-D-alanyl-D-alanine + UMP. It functions in the pathway cell wall biogenesis; peptidoglycan biosynthesis. Functionally, catalyzes the initial step of the lipid cycle reactions in the biosynthesis of the cell wall peptidoglycan: transfers peptidoglycan precursor phospho-MurNAc-pentapeptide from UDP-MurNAc-pentapeptide onto the lipid carrier undecaprenyl phosphate, yielding undecaprenyl-pyrophosphoryl-MurNAc-pentapeptide, known as lipid I. The polypeptide is Phospho-N-acetylmuramoyl-pentapeptide-transferase (Xanthomonas oryzae pv. oryzae (strain PXO99A)).